Here is a 485-residue protein sequence, read N- to C-terminus: NADH-quinone oxidoreductase subunit N (485 aa).

Transmembrane regions (helical) follow at residues 8-28 (LIAL…MLSI), 35-55 (FLNA…LWFV), 71-91 (GFAM…CTFA), 105-125 (FYLL…ANHL), 127-147 (SLFL…GYAF), 159-179 (YTIL…LVYA), 203-223 (LLAG…LVPF), 235-255 (PAPV…GVVM), 271-291 (VVLA…ALSQ), 297-317 (LLGY…IALQ), 326-346 (VGVY…VVSL), 373-393 (AAVM…LGFI), 408-430 (WWLV…RVAV), and 455-475 (IVVL…QPLI).

This sequence belongs to the complex I subunit 2 family. As to quaternary structure, NDH-1 is composed of 13 different subunits. Subunits NuoA, H, J, K, L, M, N constitute the membrane sector of the complex.

Its subcellular location is the cell inner membrane. The catalysed reaction is a quinone + NADH + 5 H(+)(in) = a quinol + NAD(+) + 4 H(+)(out). Functionally, NDH-1 shuttles electrons from NADH, via FMN and iron-sulfur (Fe-S) centers, to quinones in the respiratory chain. The immediate electron acceptor for the enzyme in this species is believed to be ubiquinone. Couples the redox reaction to proton translocation (for every two electrons transferred, four hydrogen ions are translocated across the cytoplasmic membrane), and thus conserves the redox energy in a proton gradient. This is NADH-quinone oxidoreductase subunit N from Escherichia coli O6:K15:H31 (strain 536 / UPEC).